Reading from the N-terminus, the 755-residue chain is Catalase-peroxidase (755 aa).

The tryptophyl-tyrosyl-methioninium (Trp-Tyr) (with M-271) cross-link spans 91–245; the sequence is WHSAGTYRTA…LAAVQMGLIY (155 aa). Histidine 92 (proton acceptor) is an active-site residue. Residues 193-229 form a disordered region; the sequence is DNRYGKDPESMQPPGEGTLVAEPAEHGNEESRTNQGE. Over residues 215–224 the composition is skewed to basic and acidic residues; it reads PAEHGNEESR. The segment at residues 245 to 271 is a cross-link (tryptophyl-tyrosyl-methioninium (Tyr-Met) (with W-91)); the sequence is YVNPEGPEGNPDPVASAKDIRETFGRM. A heme-binding site is contributed by histidine 286.

The protein belongs to the peroxidase family. Peroxidase/catalase subfamily. As to quaternary structure, homodimer or homotetramer. It depends on heme b as a cofactor. Formation of the three residue Trp-Tyr-Met cross-link is important for the catalase, but not the peroxidase activity of the enzyme.

The catalysed reaction is H2O2 + AH2 = A + 2 H2O. It carries out the reaction 2 H2O2 = O2 + 2 H2O. In terms of biological role, bifunctional enzyme with both catalase and broad-spectrum peroxidase activity. This chain is Catalase-peroxidase, found in Pseudomonas fluorescens (strain Pf0-1).